Consider the following 145-residue polypeptide: Ribonuclease P protein component (145 aa).

Residues 119 to 145 (PLPAAPGTMPPARTVRPSSPSPTEPEL) form a disordered region.

The protein belongs to the RnpA family. Consists of a catalytic RNA component (M1 or rnpB) and a protein subunit.

The enzyme catalyses Endonucleolytic cleavage of RNA, removing 5'-extranucleotides from tRNA precursor.. In terms of biological role, RNaseP catalyzes the removal of the 5'-leader sequence from pre-tRNA to produce the mature 5'-terminus. It can also cleave other RNA substrates such as 4.5S RNA. The protein component plays an auxiliary but essential role in vivo by binding to the 5'-leader sequence and broadening the substrate specificity of the ribozyme. The sequence is that of Ribonuclease P protein component from Xanthomonas euvesicatoria pv. vesicatoria (strain 85-10) (Xanthomonas campestris pv. vesicatoria).